Consider the following 447-residue polypeptide: MTTILKHLPVGQRIGIAFSGGLDTSAALLWMRKKGAVPYAYTANLGQPDEDDYDAIPRRAKEYGAEGARLIDCRKQLVAEGIAAIQCGAFHNTTGGLTYFNTTPLGRAVTGTMLVAAMKEDGVNIWGDGSTYKGNDIERFYRYGLLTNAELQIYKPWLDSDFINELGGRHEMSEFMIACGFDYKMSVEKAYSTDSNMLGATHEAKDLEFLNSSVKIVNPIMGVKFWDENVKIPAEEVTVRFEQGHPVALNGKTFADDVEMMLEANRIGGRHGLGMSDQIENRIIEAKSRGIYEAPGMALLHIAYERLLTGIHNEDTIEQYHAHGRQLGRLLYQGRWFDSQALMLRDSLQRWVASQITGEVTLELRRGNDYSILNTVSDNLTYKAERLTMEKGDSMFTAEDRIGQLTMRNLDITDTREKLFGYAQSGLLSASSATGLPQVENLENKGK.

Residues 17 to 25 (AFSGGLDTS) and Ala43 each bind ATP. Residue Tyr99 coordinates L-citrulline. ATP contacts are provided by Gly129 and Thr131. The L-aspartate site is built by Thr131, Asn135, and Asp136. Asn135 is a binding site for L-citrulline. Asp136 provides a ligand contact to ATP. 2 residues coordinate L-citrulline: Arg139 and Ser192. Asp194 serves as a coordination point for ATP. L-citrulline is bound by residues Thr201, Glu203, and Glu280.

The protein belongs to the argininosuccinate synthase family. Type 2 subfamily. As to quaternary structure, homotetramer.

It is found in the cytoplasm. It catalyses the reaction L-citrulline + L-aspartate + ATP = 2-(N(omega)-L-arginino)succinate + AMP + diphosphate + H(+). The protein operates within amino-acid biosynthesis; L-arginine biosynthesis; L-arginine from L-ornithine and carbamoyl phosphate: step 2/3. This chain is Argininosuccinate synthase, found in Klebsiella pneumoniae subsp. pneumoniae (strain ATCC 700721 / MGH 78578).